The sequence spans 289 residues: MEWSLTQNKLLAFHRLMRTDKPIGALLLLWPTLWALWVATPGVPQLWILAVFVAGVWLMRAAGCVVNDYADRKFDGHVKRTANRPLPSGAVTEKEARTLFVVLVALSFLLVLTLNTMTILLSIAALALAWVYPFMKRYTHLPQVVLGAAFGWSIPMAFAAVSESVPLSCWLMFLANILWAVAYDTQYAMVDRDDDLKIGIKSTAILFGRHDKLIIGILQIAVLALMALIGWLNGLGWGYYWSVLVAGALFVYQQKLIVGREREACFKAFMNNNYVGLVLFLGLAMSYVG.

Transmembrane regions (helical) follow at residues 23–43 (IGAL…TPGV), 46–66 (LWIL…GCVV), 99–119 (LFVV…TMTI), 141–161 (LPQV…FAAV), 163–183 (ESVP…AVAY), 213–233 (LIIG…GWLN), 234–254 (GLGW…VYQQ), and 268–288 (AFMN…MSYV).

Belongs to the UbiA prenyltransferase family. Mg(2+) serves as cofactor.

It is found in the cell inner membrane. The enzyme catalyses all-trans-octaprenyl diphosphate + 4-hydroxybenzoate = 4-hydroxy-3-(all-trans-octaprenyl)benzoate + diphosphate. It functions in the pathway cofactor biosynthesis; ubiquinone biosynthesis. Functionally, catalyzes the prenylation of para-hydroxybenzoate (PHB) with an all-trans polyprenyl group. Mediates the second step in the final reaction sequence of ubiquinone-8 (UQ-8) biosynthesis, which is the condensation of the polyisoprenoid side chain with PHB, generating the first membrane-bound Q intermediate 3-octaprenyl-4-hydroxybenzoate. The sequence is that of 4-hydroxybenzoate octaprenyltransferase from Citrobacter koseri (strain ATCC BAA-895 / CDC 4225-83 / SGSC4696).